Reading from the N-terminus, the 234-residue chain is Probable transcriptional regulatory protein Pfl01_3677 (234 aa).

It belongs to the TACO1 family.

Its subcellular location is the cytoplasm. The sequence is that of Probable transcriptional regulatory protein Pfl01_3677 from Pseudomonas fluorescens (strain Pf0-1).